Here is a 417-residue protein sequence, read N- to C-terminus: Histidine--tRNA ligase (417 aa).

This sequence belongs to the class-II aminoacyl-tRNA synthetase family. As to quaternary structure, homodimer.

It localises to the cytoplasm. The enzyme catalyses tRNA(His) + L-histidine + ATP = L-histidyl-tRNA(His) + AMP + diphosphate + H(+). This Acetivibrio thermocellus (strain ATCC 27405 / DSM 1237 / JCM 9322 / NBRC 103400 / NCIMB 10682 / NRRL B-4536 / VPI 7372) (Clostridium thermocellum) protein is Histidine--tRNA ligase.